A 421-amino-acid chain; its full sequence is GTPase Obg (421 aa).

The Obg domain maps to 1-158; the sequence is MYFIDEAINE…FKIKTELKIL (158 aa). An OBG-type G domain is found at 159-324; sequence ADVGLIGYPS…LKYKMLEMIK (166 aa). GTP is bound by residues 165-172, 190-194, 211-214, 278-281, and 305-307; these read GYPSVGKS, FTTLK, DLPG, NKMD, and SLL. Mg(2+) contacts are provided by S172 and T192. Residues 342 to 421 form the OCT domain; it reads TLEEEKPDFV…ICDRVFEFIT (80 aa).

Belongs to the TRAFAC class OBG-HflX-like GTPase superfamily. OBG GTPase family. As to quaternary structure, monomer. Mg(2+) is required as a cofactor.

It is found in the cytoplasm. An essential GTPase which binds GTP, GDP and possibly (p)ppGpp with moderate affinity, with high nucleotide exchange rates and a fairly low GTP hydrolysis rate. Plays a role in control of the cell cycle, stress response, ribosome biogenesis and in those bacteria that undergo differentiation, in morphogenesis control. This is GTPase Obg from Phytoplasma mali (strain AT).